The following is a 479-amino-acid chain: 5-hydroxytryptamine receptor 7 (479 aa).

Topologically, residues 1–83 (MMDVNSSGRP…INYGRVEKVV (83 aa)) are extracellular. 2 N-linked (GlcNAc...) asparagine glycosylation sites follow: Asn5 and Asn66. A helical transmembrane segment spans residues 84–108 (IGSILTLITLLTIAGNCLVVISVCF). Topologically, residues 109–118 (VKKLRQPSNY) are cytoplasmic. A helical transmembrane segment spans residues 119 to 140 (LIVSLALADLSVAVAVMPFVSV). The Extracellular segment spans residues 141-152 (TDLIGGKWIFGH). Residues 153-178 (FFCNVFIAMDVMCCTASIMTLCVISI) traverse the membrane as a helical segment. The cysteines at positions 155 and 231 are disulfide-linked. Asp162 is a serotonin binding site. At 179–198 (DRYLGITRPLTYPVRQNGKC) the chain is on the cytoplasmic side. Residues 199-219 (MAKMILSVWLLSASITLPPLF) traverse the membrane as a helical segment. The Extracellular portion of the chain corresponds to 220–237 (GWAQNVNDDKVCLISQDF). The helical transmembrane segment at 238 to 260 (GYTIYSTAVAFYIPMSVMLFMYY) threads the bilayer. Residues 261 to 326 (QIYKAARKSA…SIFKREQKAA (66 aa)) are Cytoplasmic-facing. A helical membrane pass occupies residues 327–352 (TTLGIIVGAFTVCWLPFFLLSTARPF). The Extracellular portion of the chain corresponds to 353 to 363 (ICGTSCSCIPL). The chain crosses the membrane as a helical span at residues 364–387 (WVERTFLWLGYANSLINPFIYAFF). The Cytoplasmic portion of the chain corresponds to 388 to 479 (NRDLRTTYRS…TVEKKVMIHD (92 aa)). Cys401 carries the S-palmitoyl cysteine lipid modification.

It belongs to the G-protein coupled receptor 1 family. Predominant isoform in spleen, caudate and hippocampus. As to expression, expressed at lower levels. In terms of tissue distribution, minor isoform in terms of expression.

It localises to the cell membrane. Functionally, G-protein coupled receptor for 5-hydroxytryptamine (serotonin), a biogenic hormone that functions as a neurotransmitter, a hormone and a mitogen. Ligand binding causes a conformation change that triggers signaling via guanine nucleotide-binding proteins (G proteins) and modulates the activity of downstream effectors. HTR7 is coupled to G(s) G alpha proteins and mediates activation of adenylate cyclase activity. In Homo sapiens (Human), this protein is 5-hydroxytryptamine receptor 7.